We begin with the raw amino-acid sequence, 798 residues long: Cold shock domain-containing protein E1 (798 aa).

At Met1 the chain carries N-acetylmethionine. The CSD 1 domain occupies 26–87; it reads ETGVIEKLLT…RTGKPIAVKL (62 aa). Lys81 carries the N6-acetyllysine modification. Residue Lys91 forms a Glycyl lysine isopeptide (Lys-Gly) (interchain with G-Cter in SUMO2) linkage. Phosphoserine is present on Ser123. In terms of domain architecture, CSD 2; truncated spans 136-179; sequence VFYLTYTPEDVEGNVQLETGDKINFVIDNNKHTGAVSARNIMLL. Residues 186–245 enclose the CSD 3 domain; sequence CQGVVCAMKEAFGFIERGDVVKEIFFHYSEFKGDLETLQPGDDVEFTIKDRNGKEVATDV. Phosphoserine is present on Ser276. The 41-residue stretch at 297–337 folds into the CSD 4; truncated domain; the sequence is LPFGDKDTKSKVTLLEGDHVRFNISTDRRDKLERATNIEVL. 2 CSD domains span residues 349-410 and 447-507; these read EMGV…AIRI and NKGK…ATCV. Residue Ser514 is modified to Phosphoserine. Residues 519–579 enclose the CSD 7 domain; sequence LLGYVATLKD…KGNKVSAEKV (61 aa). Ser584 is modified (phosphoserine). 2 CSD domains span residues 610-670 and 674-735; these read PTQT…AYNI and RRAT…ACNV. Residues 748-789 enclose the SUZ-C domain; the sequence is PRPDRLVNRLKNITLDDASAPRLMVLRQPRGPDNSMGFGAER. Thr761 bears the Phosphothreonine mark.

It belongs to the UNR family. As to quaternary structure, component of a multi subunit autoregulatory ribonucleoprotein complex (ARC), at least composed of IGF2BP1, PABPC1 and CSDE1. Interacts with STRAP. Part of a complex associated with the FOS mCRD domain and consisting of PABPC1, PAIP1, HNRPD and SYNCRIP. The interaction with PABPC1 is direct and RNA-independent. Interacts with EIF4ENIF1/4E-T.

It localises to the cytoplasm. Its subcellular location is the stress granule. The protein resides in the P-body. RNA-binding protein involved in translationally coupled mRNA turnover. Implicated with other RNA-binding proteins in the cytoplasmic deadenylation/translational and decay interplay of the FOS mRNA mediated by the major coding-region determinant of instability (mCRD) domain. Required for efficient formation of stress granules. In terms of biological role, (Microbial infection) Required for internal initiation of translation of human rhinovirus RNA. This is Cold shock domain-containing protein E1 from Homo sapiens (Human).